A 121-amino-acid polypeptide reads, in one-letter code: uncharacterized protein (121 aa).

This is an uncharacterized protein from Saccharomyces cerevisiae (strain ATCC 204508 / S288c) (Baker's yeast).